The chain runs to 463 residues: ATP-dependent protease ATPase subunit HslU (463 aa).

ATP contacts are provided by residues valine 19, 61–66 (GVGKTE), aspartate 277, glutamate 341, and arginine 413.

This sequence belongs to the ClpX chaperone family. HslU subfamily. In terms of assembly, a double ring-shaped homohexamer of HslV is capped on each side by a ring-shaped HslU homohexamer. The assembly of the HslU/HslV complex is dependent on binding of ATP.

The protein localises to the cytoplasm. Its function is as follows. ATPase subunit of a proteasome-like degradation complex; this subunit has chaperone activity. The binding of ATP and its subsequent hydrolysis by HslU are essential for unfolding of protein substrates subsequently hydrolyzed by HslV. HslU recognizes the N-terminal part of its protein substrates and unfolds these before they are guided to HslV for hydrolysis. The sequence is that of ATP-dependent protease ATPase subunit HslU from Shouchella clausii (strain KSM-K16) (Alkalihalobacillus clausii).